A 150-amino-acid polypeptide reads, in one-letter code: Single-stranded DNA-binding protein rim1, mitochondrial (150 aa).

A mitochondrion-targeting transit peptide spans 1-22; it reads MLFLKSSRAFSKRLFSSSTVRY. The SSB domain maps to 25-125; sequence IQRLTLTGNL…HVSADVLFYP (101 aa). The disordered stretch occupies residues 127-150; the sequence is NKNGDESGEETHPELDADPMINSF. A compositionally biased stretch (basic and acidic residues) spans 128 to 141; sequence KNGDESGEETHPEL.

Its subcellular location is the mitochondrion. This protein binds preferentially and cooperatively to ss-DNA. Involved in mitochondrial DNA replication. The sequence is that of Single-stranded DNA-binding protein rim1, mitochondrial (rim1) from Schizosaccharomyces pombe (strain 972 / ATCC 24843) (Fission yeast).